The sequence spans 287 residues: MDSVPRDYSKRVYQGVRVKHTVKDLLAEKRSRQTSNTRLNGSVSSSQPPFIQMPGSPVMSGYYGVRRSFLSDSDFHSSKQFSNDLYTSGMSKPFACESTAGQSHTGLLESYLAEPYGDYRPPALTPTPSSLFSTSTLPPLLPPPFPSDPTHFVFRDSWEQTVPDGLSQPDPMPADALQSLPPSTSCLSQLESGSSTQHRNMGWGASLAGAQSYSLHALEDLHHTPGYPTSPPYPFTSFMTVSNDLPPKVGPLSPEEGSDVSSLHDPSPWTKEDGSMAWGSYECRRAY.

In terms of domain architecture, OCA spans 10–32; the sequence is KRVYQGVRVKHTVKDLLAEKRSR. Disordered regions lie at residues 24 to 51, 161 to 199, and 247 to 279; these read DLLA…PPFI, TVPD…TQHR, and PKVG…MAWG. Polar residues-rich tracts occupy residues 33 to 49 and 180 to 199; these read QTSN…SQPP and LPPS…TQHR.

The protein belongs to the POU2AF family. Interacts with POU2F3 (via the POU domain) in a DNA-dependent manner; this interaction recruits POU2AF2 to chromatin and increases POU2F3 transactivation activity. As to expression, expressed in tuft cells of the small intestine, trachea, thymus, and colon.

It localises to the cytoplasm. Its subcellular location is the cytosol. The protein localises to the nucleus. Transcriptional coactivator of POU2F3. This complex drives the development of tuft cells, a rare chemosensory cells that coordinate immune and neural functions within mucosal epithelial tissues. This is POU domain class 2-associating factor 2 from Mus musculus (Mouse).